The chain runs to 240 residues: UDP-2,3-diacylglucosamine hydrolase (240 aa).

Mn(2+) contacts are provided by aspartate 8, histidine 10, aspartate 41, asparagine 79, and histidine 114. 79-80 lines the substrate pocket; that stretch reads NR. Substrate-binding residues include aspartate 122, serine 160, asparagine 164, lysine 167, and histidine 195. 2 residues coordinate Mn(2+): histidine 195 and histidine 197.

This sequence belongs to the LpxH family. It depends on Mn(2+) as a cofactor.

The protein localises to the cell inner membrane. The catalysed reaction is UDP-2-N,3-O-bis[(3R)-3-hydroxytetradecanoyl]-alpha-D-glucosamine + H2O = 2-N,3-O-bis[(3R)-3-hydroxytetradecanoyl]-alpha-D-glucosaminyl 1-phosphate + UMP + 2 H(+). The protein operates within glycolipid biosynthesis; lipid IV(A) biosynthesis; lipid IV(A) from (3R)-3-hydroxytetradecanoyl-[acyl-carrier-protein] and UDP-N-acetyl-alpha-D-glucosamine: step 4/6. Functionally, hydrolyzes the pyrophosphate bond of UDP-2,3-diacylglucosamine to yield 2,3-diacylglucosamine 1-phosphate (lipid X) and UMP by catalyzing the attack of water at the alpha-P atom. Involved in the biosynthesis of lipid A, a phosphorylated glycolipid that anchors the lipopolysaccharide to the outer membrane of the cell. The chain is UDP-2,3-diacylglucosamine hydrolase from Yersinia pseudotuberculosis serotype O:1b (strain IP 31758).